The primary structure comprises 635 residues: Sulfite reductase [ferredoxin], chloroplastic (635 aa).

The N-terminal 50 residues, 1–50 (MSGAIGGAEVHGFRGAAAQLPRSRVLGRPIRVAPPAAARPGGASAGSIRA), are a transit peptide targeting the chloroplast. Disordered regions lie at residues 31–50 (RVAPPAAARPGGASAGSIRA) and 245–267 (PEVTKARNDNSHGTNFPDSPEPI). Residues 245–254 (PEVTKARNDN) show a composition bias toward basic and acidic residues. Positions 494, 500, 540, and 544 each coordinate [4Fe-4S] cluster. Residue Cys544 coordinates siroheme.

The protein belongs to the nitrite and sulfite reductase 4Fe-4S domain family. Monomer. Interacts with ferredoxin. Siroheme is required as a cofactor. The cofactor is [4Fe-4S] cluster. Post-translationally, phosphorylated; this phosphorylation reduces DNA-binding. Present in roots and leaves (at protein level). In leaves, sulfite reductase activity is detected in both bundle sheath and mesophyll cell types.

It is found in the plastid. The protein resides in the chloroplast stroma. Its subcellular location is the chloroplast nucleoid. It localises to the plastid stroma. The enzyme catalyses hydrogen sulfide + 6 oxidized [2Fe-2S]-[ferredoxin] + 3 H2O = sulfite + 6 reduced [2Fe-2S]-[ferredoxin] + 7 H(+). With respect to regulation, inhibited by the tryptophan-modifying reagent, N-bromosuccinimide (NBS), by the lysine-modifying reagent, N-acetylsuccinimide and by the arginine-modifying reagent, phenylglyoxal. Complex formation with ferredoxin prevents these inhibitions. In terms of biological role, essential protein with sulfite reductase activity required in assimilatory sulfate reduction pathway during both primary and secondary metabolism and thus involved in development and growth. Its function is as follows. DNA-binding protein that binds to both double-stranded and single-stranded DNA without significant sequence specificity to reversibly repress the transcriptional activity of chloroplast nucleoids by promoting DNA compaction and possibly regulate DNA replication. The chain is Sulfite reductase [ferredoxin], chloroplastic (SIR) from Zea mays (Maize).